The sequence spans 588 residues: MGSTPTDLPGEDVADNRSGVGGGISDVYGEDSATLDQLVTPWVTSVASGYTLMRDPRYNKGLAFTDKERDAHYLTGLLPPVILSQDVQERKVMHNLRQYTVPLQRYMALMDLQERNERLFYKLLIDNVEELLPVVYTPTVGEACQKYGSIFRKPQGLYISLNEKGKILEVLKNWPQRGIQVIVVTDGERILGLGDLGCQGMGIPVGKLSLYTALGGIRPSACLPITIDVGTNNEKLLNDEFYIGLKQRRATGQEYAEFLHEFMCAVKQNYGEKVLVQFEDFANHNAFDLLSKYSDSHLVFNDDIQGTASVVLAGLIAAQKVLGKKLADHTFLFLGAGEAGTGIAELIALKISKETGAPITETRKKIWLVDSKGLIVSSRKESLQHFKQPWAHEHKPVKDLIGAVNAIKPTVLIGTSGVGQTFTKEVVEAMATNNEKPLILALSNPTSQAECTAEQAYTWTKGRAIFGSGSPFDPVVYDGKTYLPGQANNCYIFPGLGLGLIMSGAIRVRDDMLLAASEALAAQVTEEHYANGLIYPPFSNIREISANIAACVAAKTYDLGLASNLPRAKDLVKFAESSMYSPVYRNYR.

The disordered stretch occupies residues 1-21 (MGSTPTDLPGEDVADNRSGVG). N-acetylglycine is present on G2. Catalysis depends on Y136, which acts as the Proton donor. Residue R189 participates in NADP(+) binding. K207 acts as the Proton acceptor in catalysis. 3 residues coordinate a divalent metal cation: E279, D280, and D303. NADP(+) is bound by residues D303, 332–348 (LFLGAGEAGTGIAELIA), and N444.

Belongs to the malic enzymes family. In terms of assembly, homohexamers and homooctamers. The cofactor is Mg(2+). Mn(2+) is required as a cofactor. Expressed in leaves, stems, flowers and roots. Particularly present in vasculatures, trichome basal cells and hydatodes.

It localises to the cytoplasm. It catalyses the reaction (S)-malate + NADP(+) = pyruvate + CO2 + NADPH. It carries out the reaction oxaloacetate + H(+) = pyruvate + CO2. Its activity is regulated as follows. Activated by coenzyme A (CoA), aspartate, succinate and fumarate. Repressed by oxaloacetate, glucose and ATP. The polypeptide is NADP-dependent malic enzyme 2 (NADP-ME2) (Arabidopsis thaliana (Mouse-ear cress)).